Reading from the N-terminus, the 73-residue chain is Protein DSS1 HOMOLOG ON CHROMOSOME V (73 aa).

Belongs to the DSS1/SEM1 family. Part of the 26S proteasome. Interacts with BRCA2B. Interacts with EER5. Interacts with UCH1 and UCH2.

Its function is as follows. Subunit of the 26S proteasome which plays a role in ubiquitin-dependent proteolysis. Also associates with the TREX-2 complex that is required for transcription-coupled mRNA export. In Arabidopsis thaliana (Mouse-ear cress), this protein is Protein DSS1 HOMOLOG ON CHROMOSOME V.